The chain runs to 384 residues: S-adenosylmethionine synthase (384 aa).

ATP is bound at residue H15. D17 contacts Mg(2+). E43 serves as a coordination point for K(+). L-methionine-binding residues include E56 and Q99. The segment at 99–109 is flexible loop; sequence QSPDINQGVDR. ATP contacts are provided by residues 164-166, 230-231, D239, 245-246, A262, and K266; these read DAK, RF, and RK. D239 lines the L-methionine pocket. An L-methionine-binding site is contributed by K270.

It belongs to the AdoMet synthase family. In terms of assembly, homotetramer; dimer of dimers. Mg(2+) is required as a cofactor. Requires K(+) as cofactor.

Its subcellular location is the cytoplasm. It carries out the reaction L-methionine + ATP + H2O = S-adenosyl-L-methionine + phosphate + diphosphate. It functions in the pathway amino-acid biosynthesis; S-adenosyl-L-methionine biosynthesis; S-adenosyl-L-methionine from L-methionine: step 1/1. In terms of biological role, catalyzes the formation of S-adenosylmethionine (AdoMet) from methionine and ATP. The overall synthetic reaction is composed of two sequential steps, AdoMet formation and the subsequent tripolyphosphate hydrolysis which occurs prior to release of AdoMet from the enzyme. In Klebsiella pneumoniae (strain 342), this protein is S-adenosylmethionine synthase.